The chain runs to 361 residues: uncharacterized protein (361 aa).

ATP is bound at residue 41–48 (GPLNSGKT).

Belongs to the archaeal ATPase family.

This is an uncharacterized protein from Methanocaldococcus jannaschii (strain ATCC 43067 / DSM 2661 / JAL-1 / JCM 10045 / NBRC 100440) (Methanococcus jannaschii).